A 139-amino-acid chain; its full sequence is Phosphoribosyl-AMP cyclohydrolase (139 aa).

Asp95 serves as a coordination point for Mg(2+). Position 96 (Cys96) interacts with Zn(2+). Positions 97 and 99 each coordinate Mg(2+). Zn(2+)-binding residues include Cys114 and Cys121.

This sequence belongs to the PRA-CH family. As to quaternary structure, homodimer. It depends on Mg(2+) as a cofactor. Zn(2+) is required as a cofactor.

The protein localises to the cytoplasm. It carries out the reaction 1-(5-phospho-beta-D-ribosyl)-5'-AMP + H2O = 1-(5-phospho-beta-D-ribosyl)-5-[(5-phospho-beta-D-ribosylamino)methylideneamino]imidazole-4-carboxamide. It functions in the pathway amino-acid biosynthesis; L-histidine biosynthesis; L-histidine from 5-phospho-alpha-D-ribose 1-diphosphate: step 3/9. Catalyzes the hydrolysis of the adenine ring of phosphoribosyl-AMP. This Chelativorans sp. (strain BNC1) protein is Phosphoribosyl-AMP cyclohydrolase.